Reading from the N-terminus, the 315-residue chain is Type II restriction enzyme AvaI (315 aa).

It carries out the reaction Endonucleolytic cleavage of DNA to give specific double-stranded fragments with terminal 5'-phosphates.. A P subtype restriction enzyme that recognizes the double-stranded sequence 5'-CYCGRG-3' and cleaves after C-1. In Anabaena variabilis, this protein is Type II restriction enzyme AvaI.